The primary structure comprises 374 residues: 4-hydroxy-3-methylbut-2-en-1-yl diphosphate synthase (flavodoxin) (374 aa).

[4Fe-4S] cluster is bound by residues cysteine 270, cysteine 273, cysteine 305, and glutamate 312.

The protein belongs to the IspG family. It depends on [4Fe-4S] cluster as a cofactor.

It carries out the reaction (2E)-4-hydroxy-3-methylbut-2-enyl diphosphate + oxidized [flavodoxin] + H2O + 2 H(+) = 2-C-methyl-D-erythritol 2,4-cyclic diphosphate + reduced [flavodoxin]. It participates in isoprenoid biosynthesis; isopentenyl diphosphate biosynthesis via DXP pathway; isopentenyl diphosphate from 1-deoxy-D-xylulose 5-phosphate: step 5/6. In terms of biological role, converts 2C-methyl-D-erythritol 2,4-cyclodiphosphate (ME-2,4cPP) into 1-hydroxy-2-methyl-2-(E)-butenyl 4-diphosphate. The polypeptide is 4-hydroxy-3-methylbut-2-en-1-yl diphosphate synthase (flavodoxin) (Yersinia enterocolitica serotype O:8 / biotype 1B (strain NCTC 13174 / 8081)).